The sequence spans 253 residues: uncharacterized protein (253 aa).

This is an uncharacterized protein from Haemophilus influenzae (strain ATCC 51907 / DSM 11121 / KW20 / Rd).